A 213-amino-acid polypeptide reads, in one-letter code: Holliday junction branch migration complex subunit RuvA (213 aa).

The tract at residues M1–S69 is domain I. Residues S70–V148 are domain II. A flexible linker region spans residues A149–L158. The tract at residues L158–H213 is domain III.

Belongs to the RuvA family. As to quaternary structure, homotetramer. Forms an RuvA(8)-RuvB(12)-Holliday junction (HJ) complex. HJ DNA is sandwiched between 2 RuvA tetramers; dsDNA enters through RuvA and exits via RuvB. An RuvB hexamer assembles on each DNA strand where it exits the tetramer. Each RuvB hexamer is contacted by two RuvA subunits (via domain III) on 2 adjacent RuvB subunits; this complex drives branch migration. In the full resolvosome a probable DNA-RuvA(4)-RuvB(12)-RuvC(2) complex forms which resolves the HJ.

It is found in the cytoplasm. Functionally, the RuvA-RuvB-RuvC complex processes Holliday junction (HJ) DNA during genetic recombination and DNA repair, while the RuvA-RuvB complex plays an important role in the rescue of blocked DNA replication forks via replication fork reversal (RFR). RuvA specifically binds to HJ cruciform DNA, conferring on it an open structure. The RuvB hexamer acts as an ATP-dependent pump, pulling dsDNA into and through the RuvAB complex. HJ branch migration allows RuvC to scan DNA until it finds its consensus sequence, where it cleaves and resolves the cruciform DNA. The chain is Holliday junction branch migration complex subunit RuvA from Nostoc sp. (strain PCC 7120 / SAG 25.82 / UTEX 2576).